The following is a 131-amino-acid chain: Small ribosomal subunit protein uS8 (131 aa).

The protein belongs to the universal ribosomal protein uS8 family. In terms of assembly, part of the 30S ribosomal subunit. Contacts proteins S5 and S12.

In terms of biological role, one of the primary rRNA binding proteins, it binds directly to 16S rRNA central domain where it helps coordinate assembly of the platform of the 30S subunit. The sequence is that of Small ribosomal subunit protein uS8 from Halorhodospira halophila (strain DSM 244 / SL1) (Ectothiorhodospira halophila (strain DSM 244 / SL1)).